The sequence spans 305 residues: Syntaxin-112 (305 aa).

Met1 carries the N-acetylmethionine modification. The stretch at 52–119 (QEIETIKTLI…TLIETLEKRN (68 aa)) forms a coiled coil. In terms of domain architecture, t-SNARE coiled-coil homology spans 210–272 (DLKTKERHEA…SGGTNSLYYA (63 aa)).

This sequence belongs to the syntaxin family. Part of the t-SNARE complex.

Vesicle trafficking protein that functions in the secretory pathway. The chain is Syntaxin-112 (SYP112) from Arabidopsis thaliana (Mouse-ear cress).